The following is a 156-amino-acid chain: Succinate dehydrogenase assembly factor 2-B, mitochondrial (156 aa).

The N-terminal 24 residues, 1 to 24 (MLRQFIVSTVGRRLQLPMMAQSRL), are a transit peptide targeting the mitochondrion.

This sequence belongs to the SDHAF2 family. Interacts with the flavoprotein subunit within the SDH catalytic dimer.

The protein resides in the mitochondrion matrix. Functionally, plays an essential role in the assembly of succinate dehydrogenase (SDH), an enzyme complex (also referred to as respiratory complex II) that is a component of both the tricarboxylic acid (TCA) cycle and the mitochondrial electron transport chain, and which couples the oxidation of succinate to fumarate with the reduction of ubiquinone (coenzyme Q) to ubiquinol. Required for flavinylation (covalent attachment of FAD) of the flavoprotein subunit of the SDH catalytic dimer. This chain is Succinate dehydrogenase assembly factor 2-B, mitochondrial, found in Drosophila simulans (Fruit fly).